Consider the following 291-residue polypeptide: Regulator of rDNA transcription protein 5 (291 aa).

The RRM 1 domain occupies 21-104; sequence KRIYISNLDF…RTLKIKMYVP (84 aa). The disordered stretch occupies residues 109–151; the sequence is ARAERRKEKRKVPAPQAEENPDAAPQDAQQPQPPAPAEEPTSK. Positions 152–235 constitute an RRM 2 domain; it reads DTVYCAYLPS…KKITLRPARL (84 aa). The tract at residues 271-291 is disordered; sequence HRQQEAEIPAAETPDDVAATA.

The protein belongs to the RRT5 family.

May be involved in the modulation of rDNA transcription. The chain is Regulator of rDNA transcription protein 5 (RRT5) from Lachancea thermotolerans (strain ATCC 56472 / CBS 6340 / NRRL Y-8284) (Yeast).